The sequence spans 132 residues: Small ribosomal subunit protein uS8c (132 aa).

It belongs to the universal ribosomal protein uS8 family. As to quaternary structure, part of the 30S ribosomal subunit.

Its subcellular location is the plastid. The protein resides in the chloroplast. One of the primary rRNA binding proteins, it binds directly to 16S rRNA central domain where it helps coordinate assembly of the platform of the 30S subunit. The protein is Small ribosomal subunit protein uS8c (rps8) of Gracilaria tenuistipitata var. liui (Red alga).